The sequence spans 212 residues: Ropporin-1 (212 aa).

One can recognise an RIIa domain in the interval 12–49; it reads PELPKMLKEFAKAAIRAQPQDLIQWGADYFEALSRGET. Phosphoserine is present on Ser-56. An interaction with RHPN1 region spans residues 209 to 212; sequence VWLE.

Belongs to the ropporin family. Homodimer. Interacts with AKAP3. May interact with SPA17. Interacts with RHPN1. Interacts with FSCB; the interaction increases upon spermatozoa capacitation conditions. Interacts with CFAP61. Sumoylated, sumoylation decreases upon spermatozoa capacitation conditions.

The protein resides in the cell projection. It is found in the cilium. It localises to the flagellum. Functionally, important for male fertility. With ROPN1L, involved in fibrous sheath integrity and sperm motility, plays a role in PKA-dependent signaling processes required for spermatozoa capacitation. The protein is Ropporin-1 (ROPN1) of Macaca fascicularis (Crab-eating macaque).